Here is a 527-residue protein sequence, read N- to C-terminus: Probable bifunctional tRNA threonylcarbamoyladenosine biosynthesis protein (527 aa).

The tract at residues 1 to 323 is kae1; that stretch reads MPDIMPDDGL…YRADEVEVAW (323 aa). His-110, His-114, and Tyr-131 together coordinate Fe cation. L-threonylcarbamoyladenylate-binding positions include 131–135, Asp-163, Gly-176, Glu-180, and Asn-256; that span reads YASGA. Asp-284 provides a ligand contact to Fe cation. The Protein kinase domain occupies 333–527; the sequence is IGPHEGGVAR…HEVELRGRYL (195 aa). ATP is bound by residues 340-348 and Lys-357; that span reads VARGAEAVV. Asp-444 serves as the catalytic Proton acceptor; for kinase activity.

The protein in the N-terminal section; belongs to the KAE1 / TsaD family. It in the C-terminal section; belongs to the protein kinase superfamily. Tyr protein kinase family. BUD32 subfamily. As to quaternary structure, component of the KEOPS complex that consists of Kae1, Bud32, Cgi121 and Pcc1; the whole complex dimerizes. The cofactor is Fe(2+).

The protein localises to the cytoplasm. The enzyme catalyses L-seryl-[protein] + ATP = O-phospho-L-seryl-[protein] + ADP + H(+). It carries out the reaction L-threonyl-[protein] + ATP = O-phospho-L-threonyl-[protein] + ADP + H(+). The catalysed reaction is L-threonylcarbamoyladenylate + adenosine(37) in tRNA = N(6)-L-threonylcarbamoyladenosine(37) in tRNA + AMP + H(+). In terms of biological role, required for the formation of a threonylcarbamoyl group on adenosine at position 37 (t(6)A37) in tRNAs that read codons beginning with adenine. Is a component of the KEOPS complex that is probably involved in the transfer of the threonylcarbamoyl moiety of threonylcarbamoyl-AMP (TC-AMP) to the N6 group of A37. The Kae1 domain likely plays a direct catalytic role in this reaction. The Bud32 domain probably displays kinase activity that regulates Kae1 function. This Methanoculleus marisnigri (strain ATCC 35101 / DSM 1498 / JR1) protein is Probable bifunctional tRNA threonylcarbamoyladenosine biosynthesis protein.